Here is a 559-residue protein sequence, read N- to C-terminus: Potassium-transporting ATPase potassium-binding subunit (559 aa).

Helical transmembrane passes span 5 to 25 (GFLLTASFLLILFVLARPLGV), 63 to 83 (LLAILTLNLLGLTVLFLMLLG), 132 to 152 (GLTVQNFLSAATGIAVIFALI), 170 to 190 (LVRITLWILLPLALLIALLFI), 250 to 270 (LTNMVQMLAIFLIPAALCFAF), 283 to 303 (LLWAMSIIFVVCVAVVMSAEV), 329 to 349 (VLVSSLFAVVTTAASCGAVIA), 356 to 376 (ALGGMVPMWLMQIGEVVFGGV), 379 to 399 (GLYGMLLFVLLAVFIAGLMIG), 416 to 436 (MTALAILITPTLVLLGTALAM), 484 to 504 (LLAFCMFVGRFGVIIPVMAIA), and 524 to 544 (GALFVGLLIGTVLLVGALTFI).

Belongs to the KdpA family. As to quaternary structure, the system is composed of three essential subunits: KdpA, KdpB and KdpC.

The protein resides in the cell inner membrane. In terms of biological role, part of the high-affinity ATP-driven potassium transport (or Kdp) system, which catalyzes the hydrolysis of ATP coupled with the electrogenic transport of potassium into the cytoplasm. This subunit binds the periplasmic potassium ions and delivers the ions to the membrane domain of KdpB through an intramembrane tunnel. This Citrobacter koseri (strain ATCC BAA-895 / CDC 4225-83 / SGSC4696) protein is Potassium-transporting ATPase potassium-binding subunit.